We begin with the raw amino-acid sequence, 342 residues long: Dihydroorotate dehydrogenase (quinone) (342 aa).

FMN-binding positions include 60-64 (AGLDK) and threonine 84. Lysine 64 is a binding site for substrate. 109 to 113 (NRMGF) serves as a coordination point for substrate. FMN contacts are provided by asparagine 137 and asparagine 170. Residue asparagine 170 participates in substrate binding. Serine 173 serves as the catalytic Nucleophile. Asparagine 175 contacts substrate. The FMN site is built by lysine 215 and threonine 243. 244–245 (NT) contributes to the substrate binding site. FMN contacts are provided by residues glycine 266, glycine 295, and 316-317 (YS).

The protein belongs to the dihydroorotate dehydrogenase family. Type 2 subfamily. Monomer. The cofactor is FMN.

It is found in the cell membrane. It catalyses the reaction (S)-dihydroorotate + a quinone = orotate + a quinol. It participates in pyrimidine metabolism; UMP biosynthesis via de novo pathway; orotate from (S)-dihydroorotate (quinone route): step 1/1. In terms of biological role, catalyzes the conversion of dihydroorotate to orotate with quinone as electron acceptor. The polypeptide is Dihydroorotate dehydrogenase (quinone) (Nitrosomonas europaea (strain ATCC 19718 / CIP 103999 / KCTC 2705 / NBRC 14298)).